We begin with the raw amino-acid sequence, 125 residues long: Small ribosomal subunit protein uS12 (125 aa).

Asp89 is subject to 3-methylthioaspartic acid. The segment at 105–125 (QGVKDRKQSRSKYGAKKPKAK) is disordered. Basic residues predominate over residues 113-125 (SRSKYGAKKPKAK).

This sequence belongs to the universal ribosomal protein uS12 family. As to quaternary structure, part of the 30S ribosomal subunit. Contacts proteins S8 and S17. May interact with IF1 in the 30S initiation complex.

Its function is as follows. With S4 and S5 plays an important role in translational accuracy. Functionally, interacts with and stabilizes bases of the 16S rRNA that are involved in tRNA selection in the A site and with the mRNA backbone. Located at the interface of the 30S and 50S subunits, it traverses the body of the 30S subunit contacting proteins on the other side and probably holding the rRNA structure together. The combined cluster of proteins S8, S12 and S17 appears to hold together the shoulder and platform of the 30S subunit. This Delftia acidovorans (strain DSM 14801 / SPH-1) protein is Small ribosomal subunit protein uS12.